The following is a 198-amino-acid chain: Recombination protein RecR (198 aa).

The C4-type zinc-finger motif lies at 57–72 (CSICGNLTESDPCAIC). A Toprim domain is found at 80–175 (TTILVVEESK…KVTRLARGLA (96 aa)).

Belongs to the RecR family.

Its function is as follows. May play a role in DNA repair. It seems to be involved in an RecBC-independent recombinational process of DNA repair. It may act with RecF and RecO. The polypeptide is Recombination protein RecR (Lactococcus lactis subsp. cremoris (strain MG1363)).